The sequence spans 454 residues: tRNA modification GTPase MnmE (454 aa).

Positions 26, 84, and 123 each coordinate (6S)-5-formyl-5,6,7,8-tetrahydrofolate. The TrmE-type G domain maps to 219–378 (GLQVVIAGKP…LVDAITAHAG (160 aa)). Asn-229 lines the K(+) pocket. GTP contacts are provided by residues 229 to 234 (NAGKSS), 248 to 254 (TDIAGTT), and 273 to 276 (DTAG). Ser-233 serves as a coordination point for Mg(2+). Residues Thr-248, Ile-250, and Thr-253 each coordinate K(+). Thr-254 is a Mg(2+) binding site. Residue Lys-454 participates in (6S)-5-formyl-5,6,7,8-tetrahydrofolate binding.

The protein belongs to the TRAFAC class TrmE-Era-EngA-EngB-Septin-like GTPase superfamily. TrmE GTPase family. Homodimer. Heterotetramer of two MnmE and two MnmG subunits. K(+) is required as a cofactor.

The protein localises to the cytoplasm. Functionally, exhibits a very high intrinsic GTPase hydrolysis rate. Involved in the addition of a carboxymethylaminomethyl (cmnm) group at the wobble position (U34) of certain tRNAs, forming tRNA-cmnm(5)s(2)U34. The chain is tRNA modification GTPase MnmE from Acinetobacter baumannii (strain ATCC 17978 / DSM 105126 / CIP 53.77 / LMG 1025 / NCDC KC755 / 5377).